Reading from the N-terminus, the 317-residue chain is NF-kappa-B inhibitor alpha (317 aa).

The segment at Met1–Asp39 is disordered. The segment covering Gly15–Asp39 has biased composition (basic and acidic residues). Residue Lys21 forms a Glycyl lysine isopeptide (Lys-Gly) (interchain with G-Cter in SUMO); alternate linkage. Residue Lys21 forms a Glycyl lysine isopeptide (Lys-Gly) (interchain with G-Cter in ubiquitin); alternate linkage. A Glycyl lysine isopeptide (Lys-Gly) (interchain with G-Cter in ubiquitin) cross-link involves residue Lys22. Residues His30 to Ser36 carry the Destruction motif motif. The residue at position 32 (Ser32) is a Phosphoserine; by IKKA and IKKE. At Ser36 the chain carries Phosphoserine; by IKKA, IKKB, IKKE and TBK1. At Tyr42 the chain carries Phosphotyrosine; by Tyr-kinases. The short motif at Met45–Leu54 is the Nuclear export signal element. 5 ANK repeats span residues Asp73–Phe103, Leu110–Leu139, Arg143–Leu172, Asn182–Ala211, and Asn216–Arg245. The Nuclear import signal signature appears at Leu110–Ile120. (3S)-3-hydroxyasparagine; by HIF1AN; partial occurs at positions 210 and 244. Ser283 and Ser288 each carry phosphoserine; by CK2. Thr291 carries the post-translational modification Phosphothreonine; by CK2. Phosphoserine; by CK2 is present on Ser293. Thr299 carries the post-translational modification Phosphothreonine; by CK2.

It belongs to the NF-kappa-B inhibitor family. Interacts with RELA; the interaction requires the nuclear import signal. Part of a 70-90 kDa complex at least consisting of CHUK, IKBKB, NFKBIA, RELA, ELP1 and MAP3K14. Interacts with NKIRAS1 and NKIRAS2. Interacts with isoform 1 and isoform 2 of RWDD3; the interaction enhances sumoylation. Interacts with PRMT2. Interacts with PRKACA in platelets; this interaction is disrupted by thrombin and collagen. Interacts with MEFV. Interacts with DDRGK1; positively regulates NFKBIA phosphorylation and degradation. Interacts with HNRNPA2B1; the interaction may be mediated by the RRM2 domain of HNRNPA2B1, and HNRNPA2B1 may interact simultaneously with FAM76B and either NFKBIA or NFKBIE to form a complex. As to quaternary structure, (Microbial infection) Interacts with HBV protein X. Phosphorylated at Ser-32 and Ser-36 by IKKA/CHUK and IKKB/IKBKB; disables inhibition of NF-kappa-B DNA-binding activity. Phosphorylation at positions 32 and 36 is prerequisite to recognition by the SCF(FBXW11) and SCF(BTRC) complexes, leading to polyubiquitination and subsequent degradation. Phosphorylated at Ser-32 in response to FK506 treatment: phosphorylation is independent of IKKA/CHUK and IKKB/IKBKB and promotes NFKBIA degradation, followed by NF-kappa-B activation. Phosphorylated at Tyr-42: its effect is however unclear. According to a report, phosphorylation at Tyr-42 activates NF-kappa-B without triggering proteolytic degradation of NFKBIA. According to another publication, phosphorylation at Tyr-42 inhibits NF-kappa-B activity by preventing phosphorylation at Ser-32 and Ser-36 and subsequent ubiquitination and degradation. In terms of processing, polyubiquitinated at Lys-21 and/or Lys-22 following phosphorylation at Ser-32 and Ser-36. Monoubiquitinated at Lys-21 and/or Lys-22 by UBE2D3. Ubiquitin chain elongation is then performed by CDC34 in cooperation with the SCF(FBXW11) E3 ligase complex, building ubiquitin chains from the UBE2D3-primed NFKBIA-linked ubiquitin. The resulting polyubiquitination leads to protein degradation. Also ubiquitinated by the SCF(BTRC) complex following stimulus-dependent phosphorylation at Ser-32 and Ser-36. Deubiquitinated by USP38, leading to NF-kappa-B inhibition. Post-translationally, sumoylated; sumoylation requires the presence of the nuclear import signal. Sumoylation blocks ubiquitination and proteasome-mediated degradation of the protein thereby increasing the protein stability. Hydroxylated by HIF1AN. In terms of processing, (Microbial infection) Deubiquitinated by porcine reproductive and respiratory syndrome virus Nsp2 protein, which thereby interferes with NFKBIA degradation and impairs subsequent NF-kappa-B activation.

The protein localises to the cytoplasm. It is found in the nucleus. Its function is as follows. Inhibits the activity of dimeric NF-kappa-B/REL complexes by trapping REL (RELA/p65 and NFKB1/p50) dimers in the cytoplasm by masking their nuclear localization signals. On cellular stimulation by immune and pro-inflammatory responses, becomes phosphorylated promoting ubiquitination and degradation, enabling the dimeric RELA to translocate to the nucleus and activate transcription. The sequence is that of NF-kappa-B inhibitor alpha (NFKBIA) from Homo sapiens (Human).